Reading from the N-terminus, the 469-residue chain is Glutamate--tRNA ligase 2 (469 aa).

The short motif at 8–18 (PSPTGFLHVGG) is the 'HIGH' region element. A 'KMSKS' region motif is present at residues 250–254 (KLSKR). Position 253 (Lys253) interacts with ATP.

The protein belongs to the class-I aminoacyl-tRNA synthetase family. Glutamate--tRNA ligase type 1 subfamily. In terms of assembly, monomer.

Its subcellular location is the cytoplasm. It catalyses the reaction tRNA(Glu) + L-glutamate + ATP = L-glutamyl-tRNA(Glu) + AMP + diphosphate. Its function is as follows. Catalyzes the attachment of glutamate to tRNA(Glu) in a two-step reaction: glutamate is first activated by ATP to form Glu-AMP and then transferred to the acceptor end of tRNA(Glu). The sequence is that of Glutamate--tRNA ligase 2 from Thermotoga petrophila (strain ATCC BAA-488 / DSM 13995 / JCM 10881 / RKU-1).